The sequence spans 824 residues: Type IV secretion system protein PtlC (824 aa).

456-463 contacts ATP; that stretch reads GQSGSGKT.

Belongs to the TrbE/VirB4 family.

It localises to the cell membrane. Component of the type IV secretion system ptl essential for secretion of assembled pertussis toxin (PTX) through the outer membrane. In Bordetella pertussis (strain Tohama I / ATCC BAA-589 / NCTC 13251), this protein is Type IV secretion system protein PtlC (ptlC).